Reading from the N-terminus, the 485-residue chain is uncharacterized protein (485 aa).

Topologically, residues 1 to 30 (MFSWANIGSNEYLPLKNDRKAYLNQWAKRS) are cytoplasmic. Residues 31-51 (GLAIAAICILGILILAIVKLF) traverse the membrane as a helical segment. Residues 52-485 (CFKAIIFPIV…DIEQAYSKLI (434 aa)) lie on the Extracellular side of the membrane. Asparagine 67 carries an N-linked (GlcNAc...) asparagine glycan. Positions 74–404 (STVIVISLDG…YEPLGVHGYD (331 aa)) are phosphodiesterase. Threonine 118 (nucleophile) is an active-site residue. Residues asparagine 306, asparagine 338, asparagine 453, and asparagine 467 are each glycosylated (N-linked (GlcNAc...) asparagine).

Belongs to the nucleotide pyrophosphatase/phosphodiesterase family.

It localises to the membrane. This is an uncharacterized protein from Schizosaccharomyces pombe (strain 972 / ATCC 24843) (Fission yeast).